We begin with the raw amino-acid sequence, 192 residues long: Probable cobalt-precorrin-6B C(15)-methyltransferase (decarboxylating) (192 aa).

Residues Thr20, 44-48 (GSGTG), Glu68, and Ala96 each bind S-adenosyl-L-methionine.

This sequence belongs to the methyltransferase superfamily. Archaeal-type CbiT family.

It carries out the reaction Co-precorrin-6B + S-adenosyl-L-methionine = Co-precorrin-7 + S-adenosyl-L-homocysteine + CO2. Its pathway is cofactor biosynthesis; adenosylcobalamin biosynthesis; cob(II)yrinate a,c-diamide from sirohydrochlorin (anaerobic route): step 8/10. Functionally, catalyzes the methylation of C-15 in cobalt-precorrin-6B followed by the decarboxylation of C-12 to form cobalt-precorrin-7. This is Probable cobalt-precorrin-6B C(15)-methyltransferase (decarboxylating) from Sulfurisphaera tokodaii (strain DSM 16993 / JCM 10545 / NBRC 100140 / 7) (Sulfolobus tokodaii).